The chain runs to 238 residues: Protein TIFY 3A (238 aa).

The 36-residue stretch at 39 to 74 folds into the Tify 1 domain; it reads EPDASTQLTIIFGGSCRVFNGVPAQKVQEIIRIAFA. The Jas 1 motif lies at 101–120; sequence PIARRRSLQRFLEKRRDRST. A Nuclear localization signal 1 motif is present at residues 103-110; the sequence is ARRRSLQR. The 36-residue stretch at 125-160 folds into the Tify 2 domain; it reads SMILPSQLTIIFGGSFSVFDGIPAEKVQEILHIAAA. Positions 197-222 match the Jas 2 motif; it reads PIARRRSLQRFFEKRRHRFVHTKPYS. Residues 199–206 carry the Nuclear localization signal 2 motif; the sequence is ARRRSLQR. The interval 219-238 is disordered; sequence KPYSATTSEADKNETSPIVT.

This sequence belongs to the TIFY/JAZ family. In terms of assembly, interacts with MYC2, MYB21, MYB24, AFPH2/NINJA, TIFY10A/JAZ1, TIFY10B/JAZ2, TIFY6B/JAZ3, TIFY6A/JAZ4, TIFY7/JAZ9 and TIFY9/JAZ10. In terms of processing, ubiquitinated. Targeted for degradation by the SCF(COI1) E3 ubiquitin ligase-proteasome pathway during jasmonate signaling.

It is found in the nucleus. In terms of biological role, repressor of jasmonate (JA) responses. Targets MYC2, MYC3 and MYC4 that are JA-dependent transcription activators. In Arabidopsis thaliana (Mouse-ear cress), this protein is Protein TIFY 3A (TIFY3A).